The chain runs to 389 residues: Lipopolysaccharide assembly protein B (389 aa).

The chain crosses the membrane as a helical span at residues Met1 to Gly20. The Cytoplasmic portion of the chain corresponds to Arg21 to Leu389. TPR repeat units lie at residues Leu35–Thr68, Val69–Thr102, Leu107–Arg140, Gly142–Lys174, Ala180–Ser213, Ala214–Leu247, and Ser249–Ala282. Residues Cys357, Cys360, Cys371, and Cys374 each contribute to the Fe cation site.

It belongs to the LapB family.

It localises to the cell inner membrane. Its function is as follows. Modulates cellular lipopolysaccharide (LPS) levels by regulating LpxC, which is involved in lipid A biosynthesis. May act by modulating the proteolytic activity of FtsH towards LpxC. May also coordinate assembly of proteins involved in LPS synthesis at the plasma membrane. The protein is Lipopolysaccharide assembly protein B of Escherichia coli O157:H7.